We begin with the raw amino-acid sequence, 341 residues long: HTH-type transcriptional repressor PurR (341 aa).

One can recognise an HTH lacI-type domain in the interval Ala-2–Val-56. The H-T-H motif DNA-binding region spans Ile-4–Asn-23. The DNA-binding element occupies Ser-48–Val-56. Residues Tyr-73, Arg-190, Thr-192, Phe-221, and Asp-275 each coordinate hypoxanthine.

Homodimer.

It participates in purine metabolism; purine nucleotide biosynthesis [regulation]. Is the main repressor of the genes involved in the de novo synthesis of purine nucleotides, regulating purB, purC, purEK, purF, purHD, purL, purMN and guaBA expression. PurR is allosterically activated to bind its cognate DNA by binding the purine corepressors, hypoxanthine or guanine, thereby effecting transcription repression. The chain is HTH-type transcriptional repressor PurR from Photorhabdus laumondii subsp. laumondii (strain DSM 15139 / CIP 105565 / TT01) (Photorhabdus luminescens subsp. laumondii).